Reading from the N-terminus, the 217-residue chain is Somatotropin (217 aa).

An N-terminal signal peptide occupies residues 1–26; sequence MAPGSRTSLLLAFGLLCLPWLQEGSA. Position 44 (His44) interacts with Zn(2+). Cys79 and Cys191 are oxidised to a cystine. Ser132 is subject to Phosphoserine. Zn(2+) is bound at residue Glu200. Cys208 and Cys215 are disulfide-bonded.

It belongs to the somatotropin/prolactin family.

It is found in the secreted. Its function is as follows. Plays an important role in growth control. Its major role in stimulating body growth is to stimulate the liver and other tissues to secrete IGF1. It stimulates both the differentiation and proliferation of myoblasts. It also stimulates amino acid uptake and protein synthesis in muscle and other tissues. The protein is Somatotropin (GH1) of Pan troglodytes (Chimpanzee).